A 376-amino-acid polypeptide reads, in one-letter code: S-adenosylmethionine synthase (376 aa).

Histidine 14 is a binding site for ATP. Residue aspartate 16 coordinates Mg(2+). Residue glutamate 42 coordinates K(+). L-methionine is bound by residues glutamate 55 and glutamine 98. The segment at 98–108 (QSPEIALGISS) is flexible loop. ATP-binding positions include 158–160 (DGK), 224–225 (RF), aspartate 233, 239–240 (RK), alanine 256, and lysine 260. Aspartate 233 provides a ligand contact to L-methionine. Position 264 (lysine 264) interacts with L-methionine.

Belongs to the AdoMet synthase family. As to quaternary structure, homotetramer; dimer of dimers. The cofactor is Mg(2+). Requires K(+) as cofactor.

The protein localises to the cytoplasm. The catalysed reaction is L-methionine + ATP + H2O = S-adenosyl-L-methionine + phosphate + diphosphate. It participates in amino-acid biosynthesis; S-adenosyl-L-methionine biosynthesis; S-adenosyl-L-methionine from L-methionine: step 1/1. Functionally, catalyzes the formation of S-adenosylmethionine (AdoMet) from methionine and ATP. The overall synthetic reaction is composed of two sequential steps, AdoMet formation and the subsequent tripolyphosphate hydrolysis which occurs prior to release of AdoMet from the enzyme. This chain is S-adenosylmethionine synthase, found in Aquifex aeolicus (strain VF5).